The primary structure comprises 226 residues: MGEKIKNLPEELRPRERLLRHGPESLNPAELLAVLLGSGTPQENALELALRLLTTFGGLKGLIEVHPEQLKSFKGIGQAKAAKLLAALELARRYYELTGENKLNFLNPDDVYNYLRYKIGHKKQEQVVVLYLNTKNQLCGENIVAIGGVNHAGVSPGDIFREAVKIGAYAVIIAHNHPSGDPTPSKEDIDFTGRVKKASEILGIKLLDHIILGENKYISMKAERLF.

The MPN domain occupies 104-226 (NFLNPDDVYN…YISMKAERLF (123 aa)). Positions 175, 177, and 188 each coordinate Zn(2+). Residues 175 to 188 (HNHPSGDPTPSKED) carry the JAMM motif motif.

It belongs to the UPF0758 family.

This Carboxydothermus hydrogenoformans (strain ATCC BAA-161 / DSM 6008 / Z-2901) protein is UPF0758 protein CHY_0341.